We begin with the raw amino-acid sequence, 1241 residues long: Putative ABC transporter B family member 8 (1241 aa).

A helical transmembrane segment spans residues 24 to 44; sequence FADWIDIVLMVLGSVGAIGDG. In terms of domain architecture, ABC transmembrane type-1 1 spans 33 to 323; sequence MVLGSVGAIG…ALTEIRYFSE (291 aa). N-linked (GlcNAc...) asparagine glycosylation is present at Asn-48. The next 5 helical transmembrane spans lie at 82–102, 157–177, 183–203, 263–283, and 297–317; these read LYFV…GYCW, VPIF…SAYF, VVAI…GKYL, GLAV…AWYG, and IYAA…ALTE. The 237-residue stretch at 360–596 folds into the ABC transporter 1 domain; sequence VEFERVTLVY…NNHYAKLVKL (237 aa). ATP is bound at residue 395 to 402; sequence GASGSGKS. Residues Asn-571, Asn-632, and Asn-648 are each glycosylated (N-linked (GlcNAc...) asparagine). The region spanning 676 to 964 is the ABC transmembrane type-1 2 domain; sequence SLVGCISATT…AGSMTSDLAK (289 aa). The next 2 membrane-spanning stretches (helical) occupy residues 686–706 and 716–736; these read FGAI…AFFA and IHIY…LNLL. Asn-773 carries N-linked (GlcNAc...) asparagine glycosylation. 2 helical membrane passes run 797 to 815 and 821 to 838; these read ISLL…IIGL and LALV…CFYT. The N-linked (GlcNAc...) asparagine glycan is linked to Asn-855. Transmembrane regions (helical) follow at residues 899–919 and 933–953; these read AWLA…TWAL and ISAG…KVIA. The ABC transporter 2 domain maps to 998 to 1236; sequence IELKNIDFSY…GGQFSRLAHA (239 aa). 1033-1040 lines the ATP pocket; it reads GTSGCGKS. Asn-1187 carries N-linked (GlcNAc...) asparagine glycosylation.

This sequence belongs to the ABC transporter superfamily. ABCB family. Multidrug resistance exporter (TC 3.A.1.201) subfamily.

It is found in the membrane. This is Putative ABC transporter B family member 8 (ABCB8) from Arabidopsis thaliana (Mouse-ear cress).